A 606-amino-acid chain; its full sequence is Scavenger receptor class A member 3 (606 aa).

At 1-56 (MKVRSAGGDGDALCVTEEDLAGDDEDMPTFPCTQKGRPGPRCSRCQKNLSLHTSVR) the chain is on the cytoplasmic side. A helical; Signal-anchor for type II membrane protein membrane pass occupies residues 57-77 (ILYLFLALLLVAVAVLASLVF). The Extracellular portion of the chain corresponds to 78-606 (RKVDSLSEDI…PGPPGSQSFY (529 aa)). N-linked (GlcNAc...) asparagine glycosylation is found at Asn-115, Asn-182, Asn-224, Asn-257, Asn-313, Asn-337, Asn-365, Asn-400, Asn-430, and Asn-451. A disordered region spans residues 454–606 (ILRGAPGPPG…PGPPGSQSFY (153 aa)). Residues 455–513 (LRGAPGPPGPRGFKGDMGVKGPVGGRGPKGDPGSLGPLGPQGPQGQPGEAGPVGERGPV) form the Collagen-like 1 domain. Low complexity predominate over residues 485–519 (DPGSLGPLGPQGPQGQPGEAGPVGERGPVGPRGFP). Gly residues predominate over residues 526 to 535 (GSFGTGGPRG). In terms of domain architecture, Collagen-like 2 spans 544 to 603 (GPPGPEGPPGSPGPSGPQGKPGIAGKTGSPGQRGAMGPKGEPGIQGPPGLPGPPGPPGSQ). 2 stretches are compositionally biased toward pro residues: residues 545–558 (PPGPEGPPGSPGPS) and 591–600 (PGLPGPPGPP).

Expressed ubiquitously.

It localises to the endoplasmic reticulum membrane. Its subcellular location is the golgi apparatus membrane. Functionally, seems to protect cells by scavenging oxidative molecules or harmful products of oxidation. This Homo sapiens (Human) protein is Scavenger receptor class A member 3 (SCARA3).